Reading from the N-terminus, the 125-residue chain is Outer membrane protein assembly factor BamE (125 aa).

A signal peptide spans 1–17; the sequence is MNKTLILALSALLGLAA. The N-palmitoyl cysteine moiety is linked to residue Cys18. Residue Cys18 is the site of S-diacylglycerol cysteine attachment.

It belongs to the BamE family. Part of the Bam complex.

Its subcellular location is the cell outer membrane. Functionally, part of the outer membrane protein assembly complex, which is involved in assembly and insertion of beta-barrel proteins into the outer membrane. The protein is Outer membrane protein assembly factor BamE of Neisseria meningitidis serogroup B (strain ATCC BAA-335 / MC58).